Consider the following 382-residue polypeptide: Leucine carboxyl methyltransferase 1 (382 aa).

Polar residues predominate over residues Met1–Thr11. The segment at Met1–Asn45 is disordered. Residues Arg88, Gly121, Asp146, Asp193–Leu194, and Glu230 contribute to the S-adenosyl-L-methionine site.

This sequence belongs to the methyltransferase superfamily. LCMT family.

It catalyses the reaction [phosphatase 2A protein]-C-terminal L-leucine + S-adenosyl-L-methionine = [phosphatase 2A protein]-C-terminal L-leucine methyl ester + S-adenosyl-L-homocysteine. Functionally, methylates the carboxyl group of the C-terminal leucine residue of protein phosphatase 2A catalytic subunits to form alpha-leucine ester residues. This chain is Leucine carboxyl methyltransferase 1 (ppm1), found in Emericella nidulans (strain FGSC A4 / ATCC 38163 / CBS 112.46 / NRRL 194 / M139) (Aspergillus nidulans).